A 101-amino-acid chain; its full sequence is Protein Tat (101 aa).

Residues Met-1–Lys-24 are interaction with human CREBBP. Positions Met-1 to Gly-48 are transactivation. Residues Cys-22, Cys-25, and Cys-27 each contribute to the Zn(2+) site. The tract at residues Cys-22–Cys-37 is cysteine-rich. The residue at position 28 (Lys-28) is an N6-acetyllysine; by host PCAF. Zn(2+)-binding residues include Cys-30, His-33, Cys-34, and Cys-37. The segment at Phe-38–Gly-48 is core. Basic residues predominate over residues Gly-48–Gly-57. The segment at Gly-48–Asp-101 is disordered. The short motif at Arg-49–Gly-57 is the Nuclear localization signal, RNA-binding (TAR), and protein transduction element. The interval Arg-49 to Glu-86 is interaction with the host capping enzyme RNGTT. Residues Lys-50 and Lys-51 each carry the N6-acetyllysine; by host EP300 and GCN5L2 modification. Arg-52 carries the post-translational modification Asymmetric dimethylarginine; by host PRMT6. Lys-71 participates in a covalent cross-link: Glycyl lysine isopeptide (Lys-Gly) (interchain with G-Cter in ubiquitin). Over residues Lys-85–Asp-101 the composition is skewed to basic and acidic residues.

It belongs to the lentiviruses Tat family. As to quaternary structure, interacts with host CCNT1. Associates with the P-TEFb complex composed at least of Tat, P-TEFb (CDK9 and CCNT1), TAR RNA, RNA Pol II. Recruits the HATs CREBBP, TAF1/TFIID, EP300, PCAF and GCN5L2. Interacts with host KAT5/Tip60; this interaction targets the latter to degradation. Interacts with the host deacetylase SIRT1. Interacts with host capping enzyme RNGTT; this interaction stimulates RNGTT. Binds to host KDR, and to the host integrins ITGAV/ITGB3 and ITGA5/ITGB1. Interacts with host KPNB1/importin beta-1 without previous binding to KPNA1/importin alpha-1. Interacts with EIF2AK2. Interacts with host nucleosome assembly protein NAP1L1; this interaction may be required for the transport of Tat within the nucleus, since the two proteins interact at the nuclear rim. Interacts with host C1QBP/SF2P32; this interaction involves lysine-acetylated Tat. Interacts with the host chemokine receptors CCR2, CCR3 and CXCR4. Interacts with host DPP4/CD26; this interaction may trigger an anti-proliferative effect. Interacts with host LDLR. Interacts with the host extracellular matrix metalloproteinase MMP1. Interacts with host PRMT6; this interaction mediates Tat's methylation. Interacts with, and is ubiquitinated by MDM2/Hdm2. Interacts with host PSMC3 and HTATIP2. Interacts with STAB1; this interaction may overcome SATB1-mediated repression of IL2 and IL2RA (interleukin) in T cells by binding to the same domain than HDAC1. Interacts (when acetylated) with human CDK13, thereby increasing HIV-1 mRNA splicing and promoting the production of the doubly spliced HIV-1 protein Nef. Interacts with host TBP; this interaction modulates the activity of transcriptional pre-initiation complex. Interacts with host RELA. Interacts with host PLSCR1; this interaction negatively regulates Tat transactivation activity by altering its subcellular distribution. Post-translationally, asymmetrical arginine methylation by host PRMT6 seems to diminish the transactivation capacity of Tat and affects the interaction with host CCNT1. Acetylation by EP300, CREBBP, GCN5L2/GCN5 and PCAF regulates the transactivation activity of Tat. EP300-mediated acetylation of Lys-50 promotes dissociation of Tat from the TAR RNA through the competitive binding to PCAF's bromodomain. In addition, the non-acetylated Tat's N-terminus can also interact with PCAF. PCAF-mediated acetylation of Lys-28 enhances Tat's binding to CCNT1. Lys-50 is deacetylated by SIRT1. In terms of processing, polyubiquitination by host MDM2 does not target Tat to degradation, but activates its transactivation function and fosters interaction with CCNT1 and TAR RNA. Post-translationally, phosphorylated by EIF2AK2 on serine and threonine residues adjacent to the basic region important for TAR RNA binding and function. Phosphorylation of Tat by EIF2AK2 is dependent on the prior activation of EIF2AK2 by dsRNA.

It localises to the host nucleus. It is found in the host nucleolus. The protein resides in the host cytoplasm. The protein localises to the secreted. Functionally, transcriptional activator that increases RNA Pol II processivity, thereby increasing the level of full-length viral transcripts. Recognizes a hairpin structure at the 5'-LTR of the nascent viral mRNAs referred to as the transactivation responsive RNA element (TAR) and recruits the cyclin T1-CDK9 complex (P-TEFb complex) that will in turn hyperphosphorylate the RNA polymerase II to allow efficient elongation. The CDK9 component of P-TEFb and other Tat-activated kinases hyperphosphorylate the C-terminus of RNA Pol II that becomes stabilized and much more processive. Other factors such as HTATSF1/Tat-SF1, SUPT5H/SPT5, and HTATIP2 are also important for Tat's function. Besides its effect on RNA Pol II processivity, Tat induces chromatin remodeling of proviral genes by recruiting the histone acetyltransferases (HATs) CREBBP, EP300 and PCAF to the chromatin. This also contributes to the increase in proviral transcription rate, especially when the provirus integrates in transcriptionally silent region of the host genome. To ensure maximal activation of the LTR, Tat mediates nuclear translocation of NF-kappa-B by interacting with host RELA. Through its interaction with host TBP, Tat may also modulate transcription initiation. Tat can reactivate a latently infected cell by penetrating in it and transactivating its LTR promoter. In the cytoplasm, Tat is thought to act as a translational activator of HIV-1 mRNAs. Extracellular circulating Tat can be endocytosed by surrounding uninfected cells via the binding to several surface receptors such as CD26, CXCR4, heparan sulfate proteoglycans (HSPG) or LDLR. Neurons are rarely infected, but they internalize Tat via their LDLR. Through its interaction with nuclear HATs, Tat is potentially able to control the acetylation-dependent cellular gene expression. Modulates the expression of many cellular genes involved in cell survival, proliferation or in coding for cytokines or cytokine receptors. Tat plays a role in T-cell and neurons apoptosis. Tat induced neurotoxicity and apoptosis probably contribute to neuroAIDS. Circulating Tat also acts as a chemokine-like and/or growth factor-like molecule that binds to specific receptors on the surface of the cells, affecting many cellular pathways. In the vascular system, Tat binds to ITGAV/ITGB3 and ITGA5/ITGB1 integrins dimers at the surface of endothelial cells and competes with bFGF for heparin-binding sites, leading to an excess of soluble bFGF. The protein is Protein Tat of Homo sapiens (Human).